The following is a 955-amino-acid chain: 2-oxoglutarate dehydrogenase E1 component (955 aa).

This sequence belongs to the alpha-ketoglutarate dehydrogenase family. Homodimer. Part of the 2-oxoglutarate dehydrogenase (OGDH) complex composed of E1 (2-oxoglutarate dehydrogenase), E2 (dihydrolipoamide succinyltransferase) and E3 (dihydrolipoamide dehydrogenase); the complex contains multiple copies of the three enzymatic components (E1, E2 and E3). The cofactor is thiamine diphosphate.

The enzyme catalyses N(6)-[(R)-lipoyl]-L-lysyl-[protein] + 2-oxoglutarate + H(+) = N(6)-[(R)-S(8)-succinyldihydrolipoyl]-L-lysyl-[protein] + CO2. E1 component of the 2-oxoglutarate dehydrogenase (OGDH) complex which catalyzes the decarboxylation of 2-oxoglutarate, the first step in the conversion of 2-oxoglutarate to succinyl-CoA and CO(2). In Bacillus cereus (strain G9842), this protein is 2-oxoglutarate dehydrogenase E1 component.